The primary structure comprises 187 residues: uncharacterized protein (187 aa).

This is an uncharacterized protein from Dictyostelium discoideum (Social amoeba).